We begin with the raw amino-acid sequence, 396 residues long: Probable sugar efflux transporter (396 aa).

Helical transmembrane passes span 15 to 35 (VVTLAVAAFIFNTTEFVPVGL), 50 to 70 (VGIMLTIYAWVVALMSLPFML), 81 to 101 (LICLFVVFIASHVLSFLSWSF), 103 to 123 (VLVISRIGVAFAHAIFWSITA), 136 to 156 (AQALSLIATGTALAMVLGLPL), 170 to 190 (FFAIGIGAFITLLCLIKLLPL), 209 to 229 (PALMSIYLLTVVVVTAHYTAY), 246 to 266 (FATALLLLLGGAGIIGSVIFG), 275 to 295 (ALVSTAIALLLVCLALLLPAA), 299 to 319 (IHLGVLSIFWGIAMMIIGLGM), 333 to 353 (VAMALFSGIFNIGIGAGALVG), and 364 to 384 (MIGYVGAVPAFAALIWSIIIF).

This sequence belongs to the major facilitator superfamily. SotB (TC 2.A.1.2) family.

It localises to the cell inner membrane. In terms of biological role, involved in the efflux of sugars. The physiological role may be the reduction of the intracellular concentration of toxic sugars or sugar metabolites. The polypeptide is Probable sugar efflux transporter (Escherichia coli O17:K52:H18 (strain UMN026 / ExPEC)).